Reading from the N-terminus, the 63-residue chain is Large ribosomal subunit protein uL29 (63 aa).

It belongs to the universal ribosomal protein uL29 family.

This Haemophilus ducreyi (strain 35000HP / ATCC 700724) protein is Large ribosomal subunit protein uL29.